The chain runs to 80 residues: Protein pegasus (80 aa).

An N-terminal signal peptide occupies residues 1 to 22 (MKLSAVLLAIALLALSLVQCLG). The 57-residue stretch at 24 to 80 (PDPSTKCVMECDTQEYRSICAADDKGSTKTYRNLCVMKTENCLQNANFQKISDKECP) folds into the Kazal-like domain. Cystine bridges form between C30–C65, C34–C58, and C43–C79.

As to quaternary structure, interacts with wg; the interaction facilitates short-range diffusion of wg. As to expression, strongly expressed in the developing fly wing but is excluded from the presumptive wing margin.

The protein resides in the secreted. Increases short-range diffusion of the wingless/wg protein, enhancing its signaling and expression of target genes required for wing margin morphogenesis. May act as a serine protease inhibitor since it possess the Kazal serine protease inhibitor signature. In Drosophila melanogaster (Fruit fly), this protein is Protein pegasus.